We begin with the raw amino-acid sequence, 716 residues long: Zinc finger CCCH domain-containing protein 30 (716 aa).

2 ANK repeats span residues 90 to 120 and 125 to 157; these read DYRT…DVNR and DQTT…DLNL. The segment at 201–231 is disordered; it reads VTNVPNRSSSPCHSPTGENGGSGSGSPLGSP. The span at 203 to 213 shows a compositional bias: polar residues; that stretch reads NVPNRSSSPCH. C3H1-type zinc fingers lie at residues 306-328 and 336-360; these read PCPD…HGVF and QYRT…HTPE. Residues 521–562 form a disordered region; it reads FQQQQQQQQSMLSPINTSFSSPKSVDHSLFSGGGRMSPRNVV. The span at 530-543 shows a compositional bias: polar residues; it reads SMLSPINTSFSSPK. Phosphoserine is present on Ser-566. Positions 583–594 are enriched in low complexity; the sequence is QQQQQQQQQQHQ. Disordered regions lie at residues 583–638 and 667–692; these read QQQQ…MSSE and PAEA…PVEP. Polar residues predominate over residues 605–630; it reads TNSSPIVGSPVNNNTWSSKWGSSNGQ.

The chain is Zinc finger CCCH domain-containing protein 30 from Arabidopsis thaliana (Mouse-ear cress).